The chain runs to 498 residues: Tryptophan decarboxylase TDC2 (498 aa).

An N6-(pyridoxal phosphate)lysine modification is found at K316.

Belongs to the group II decarboxylase family. Pyridoxal 5'-phosphate is required as a cofactor.

The enzyme catalyses L-tryptophan + H(+) = tryptamine + CO2. In terms of biological role, involved in the biosynthesis of tryptamine. Supplies tryptamine for the indole moiety of camptothecin (CPT), an anti-cancer monoterpene alkaloid. Represents a key step in monoterpene indole alkaloid biosynthesis. Is specific for tryptophan, and inactive against tyrosine, phenylalanine and 3,4-dihydroxyphenylalanine (dopa). This is Tryptophan decarboxylase TDC2 from Camptotheca acuminata (Happy tree).